The primary structure comprises 271 residues: Phosphate import ATP-binding protein PstB (271 aa).

Residues 25-266 enclose the ABC transporter domain; sequence FDTKNLNLWY…PSDKRTEDYI (242 aa). 57–64 is an ATP binding site; that stretch reads GPSGCGKS.

This sequence belongs to the ABC transporter superfamily. Phosphate importer (TC 3.A.1.7) family. As to quaternary structure, the complex is composed of two ATP-binding proteins (PstB), two transmembrane proteins (PstC and PstA) and a solute-binding protein (PstS).

The protein resides in the cell membrane. It catalyses the reaction phosphate(out) + ATP + H2O = ADP + 2 phosphate(in) + H(+). Its function is as follows. Part of the ABC transporter complex PstSACB involved in phosphate import. Responsible for energy coupling to the transport system. This chain is Phosphate import ATP-binding protein PstB, found in Bacillus anthracis.